The sequence spans 475 residues: Ribulose bisphosphate carboxylase large chain (475 aa).

The propeptide occupies 1 to 2 (MA). P3 is subject to N-acetylproline. Position 14 is an N6,N6,N6-trimethyllysine (K14). Substrate-binding residues include N123 and T173. K175 functions as the Proton acceptor in the catalytic mechanism. K177 is a substrate binding site. Mg(2+) is bound by residues K201, D203, and E204. At K201 the chain carries N6-carboxylysine. Catalysis depends on H294, which acts as the Proton acceptor. Positions 295, 327, and 379 each coordinate substrate.

Belongs to the RuBisCO large chain family. Type I subfamily. In terms of assembly, heterohexadecamer of 8 large chains and 8 small chains; disulfide-linked. The disulfide link is formed within the large subunit homodimers. It depends on Mg(2+) as a cofactor. The disulfide bond which can form in the large chain dimeric partners within the hexadecamer appears to be associated with oxidative stress and protein turnover.

The protein localises to the plastid. It localises to the chloroplast. The catalysed reaction is 2 (2R)-3-phosphoglycerate + 2 H(+) = D-ribulose 1,5-bisphosphate + CO2 + H2O. It catalyses the reaction D-ribulose 1,5-bisphosphate + O2 = 2-phosphoglycolate + (2R)-3-phosphoglycerate + 2 H(+). Functionally, ruBisCO catalyzes two reactions: the carboxylation of D-ribulose 1,5-bisphosphate, the primary event in carbon dioxide fixation, as well as the oxidative fragmentation of the pentose substrate in the photorespiration process. Both reactions occur simultaneously and in competition at the same active site. This Tupiella akineta (Green alga) protein is Ribulose bisphosphate carboxylase large chain.